Consider the following 231-residue polypeptide: Adenosylcobinamide-GDP ribazoletransferase (231 aa).

Transmembrane regions (helical) follow at residues 28 to 48, 97 to 117, 121 to 141, 162 to 182, and 209 to 229; these read LWLFPYAAILIALIVSVPHFI, TGAGGVAVVVVYFLLLYTLLY, FWEIALSQVLAKYSMLLLMLL, VFIGAVPVVLLCYKVGIESLA, and VIGSANCLTFAASLSALTIAG.

Belongs to the CobS family. The cofactor is Mg(2+).

The protein localises to the cell membrane. It catalyses the reaction alpha-ribazole + adenosylcob(III)inamide-GDP = adenosylcob(III)alamin + GMP + H(+). The catalysed reaction is alpha-ribazole 5'-phosphate + adenosylcob(III)inamide-GDP = adenosylcob(III)alamin 5'-phosphate + GMP + H(+). The protein operates within cofactor biosynthesis; adenosylcobalamin biosynthesis; adenosylcobalamin from cob(II)yrinate a,c-diamide: step 7/7. Joins adenosylcobinamide-GDP and alpha-ribazole to generate adenosylcobalamin (Ado-cobalamin). Also synthesizes adenosylcobalamin 5'-phosphate from adenosylcobinamide-GDP and alpha-ribazole 5'-phosphate. This is Adenosylcobinamide-GDP ribazoletransferase (cobS2) from Archaeoglobus fulgidus (strain ATCC 49558 / DSM 4304 / JCM 9628 / NBRC 100126 / VC-16).